The following is a 525-amino-acid chain: Cyclic AMP-responsive element-binding protein 3-like protein 2 (525 aa).

At 1–382 the chain is on the cytoplasmic side; that stretch reads MEIMESGDPV…SCKAAGTQTG (382 aa). Disordered stretches follow at residues 85 to 104, 203 to 267, and 309 to 338; these read LCGD…DDNF, EALQ…QGSG, and NKIS…SSEN. Composition is skewed to polar residues over residues 90–102 and 213–239; these read RPQS…SSDD and SSHG…QSQA. A bZIP domain is found at 299 to 362; that stretch reads ALKKIRRKIK…RTLLQQLQRL (64 aa). The segment at 301–330 is basic motif; the sequence is KKIRRKIKNKISAQESRRKKKEYMDSLEKR. Residues 322 to 332 show a composition bias toward basic and acidic residues; sequence EYMDSLEKRVE. Residues 341–362 are leucine-zipper; it reads LRKKVEVLESTNRTLLQQLQRL. The chain crosses the membrane as a helical; Signal-anchor for type II membrane protein span at residues 383-403; the sequence is TCLMMVVLCFAVIFGSFTQNL. The Lumenal portion of the chain corresponds to 404 to 525; sequence DMYSSSSKTI…ELDRTVNTTS (122 aa). The S1P recognition motif lies at 433 to 436; it reads RKLL. N-linked (GlcNAc...) asparagine glycans are attached at residues Asn490, Asn509, and Asn522.

It belongs to the bZIP family. ATF subfamily. As to quaternary structure, binds DNA as a dimer. Upon ER stress, translocated to the Golgi apparatus, where it is processed by regulated intramembrane proteolysis (RIP) to release the cytosol-facing N-terminal transcription factor domain. The cleavage is performed sequentially by site-1 and site-2 proteases (S1P/mbtps1 and S2P/mbtps2).

The protein resides in the endoplasmic reticulum membrane. Its subcellular location is the nucleus. Transcription factor involved in unfolded protein response (UPR). In the absence of endoplasmic reticulum (ER) stress, inserted into ER membranes, with N-terminal DNA-binding and transcription activation domains oriented toward the cytosolic face of the membrane. In response to ER stress, transported to the Golgi, where it is cleaved in a site-specific manner by resident proteases S1P/mbtps1 and S2P/mbtps2. The released N-terminal cytosolic domain is translocated to the nucleus to effect transcription of specific target genes. Plays a critical role in chondrogenesis. May protect neuroblastoma cells from ER stress-induced death. In vitro activates transcription of target genes via direct binding to the CRE site. This is Cyclic AMP-responsive element-binding protein 3-like protein 2 (creb3l2) from Xenopus laevis (African clawed frog).